Reading from the N-terminus, the 482-residue chain is tRNA sulfurtransferase (482 aa).

The THUMP domain occupies 61-165; the sequence is EAIRDALTRI…QDRLLLIKSR (105 aa). ATP is bound by residues 183 to 184, Lys265, Gly287, and Gln296; that span reads LI. A disulfide bond links Cys344 and Cys456. The Rhodanese domain occupies 404-482; sequence FVPTDVLLDI…GFSNVKVYRP (79 aa). Catalysis depends on Cys456, which acts as the Cysteine persulfide intermediate.

Belongs to the ThiI family.

Its subcellular location is the cytoplasm. The enzyme catalyses [ThiI sulfur-carrier protein]-S-sulfanyl-L-cysteine + a uridine in tRNA + 2 reduced [2Fe-2S]-[ferredoxin] + ATP + H(+) = [ThiI sulfur-carrier protein]-L-cysteine + a 4-thiouridine in tRNA + 2 oxidized [2Fe-2S]-[ferredoxin] + AMP + diphosphate. It catalyses the reaction [ThiS sulfur-carrier protein]-C-terminal Gly-Gly-AMP + S-sulfanyl-L-cysteinyl-[cysteine desulfurase] + AH2 = [ThiS sulfur-carrier protein]-C-terminal-Gly-aminoethanethioate + L-cysteinyl-[cysteine desulfurase] + A + AMP + 2 H(+). The protein operates within cofactor biosynthesis; thiamine diphosphate biosynthesis. Its function is as follows. Catalyzes the ATP-dependent transfer of a sulfur to tRNA to produce 4-thiouridine in position 8 of tRNAs, which functions as a near-UV photosensor. Also catalyzes the transfer of sulfur to the sulfur carrier protein ThiS, forming ThiS-thiocarboxylate. This is a step in the synthesis of thiazole, in the thiamine biosynthesis pathway. The sulfur is donated as persulfide by IscS. The protein is tRNA sulfurtransferase of Pectobacterium atrosepticum (strain SCRI 1043 / ATCC BAA-672) (Erwinia carotovora subsp. atroseptica).